A 167-amino-acid chain; its full sequence is Ribosome-binding factor A (167 aa).

Residues 127 to 167 (SRANAQYAGDADPYKHDEPDDDDFDDDDDVEVEDWDDDDEA) form a disordered region. Residues 145–167 (PDDDDFDDDDDVEVEDWDDDDEA) show a composition bias toward acidic residues.

It belongs to the RbfA family. In terms of assembly, monomer. Binds 30S ribosomal subunits, but not 50S ribosomal subunits or 70S ribosomes.

It localises to the cytoplasm. Functionally, one of several proteins that assist in the late maturation steps of the functional core of the 30S ribosomal subunit. Associates with free 30S ribosomal subunits (but not with 30S subunits that are part of 70S ribosomes or polysomes). Required for efficient processing of 16S rRNA. May interact with the 5'-terminal helix region of 16S rRNA. In Bifidobacterium adolescentis (strain ATCC 15703 / DSM 20083 / NCTC 11814 / E194a), this protein is Ribosome-binding factor A.